Here is a 436-residue protein sequence, read N- to C-terminus: Eukaryotic peptide chain release factor subunit 1 (436 aa).

The protein belongs to the eukaryotic release factor 1 family. In terms of assembly, heterodimer of two subunits, one of which binds GTP.

The protein localises to the cytoplasm. Functionally, directs the termination of nascent peptide synthesis (translation) in response to the termination codons UAA and UAG. In B.musculus UGA codes for tryptophan. This chain is Eukaryotic peptide chain release factor subunit 1 (eRF1), found in Blepharisma musculus.